We begin with the raw amino-acid sequence, 556 residues long: 2-succinyl-5-enolpyruvyl-6-hydroxy-3-cyclohexene-1-carboxylate synthase (556 aa).

The protein belongs to the TPP enzyme family. MenD subfamily. Homodimer. Mg(2+) serves as cofactor. The cofactor is Mn(2+). Requires thiamine diphosphate as cofactor.

The enzyme catalyses isochorismate + 2-oxoglutarate + H(+) = 5-enolpyruvoyl-6-hydroxy-2-succinyl-cyclohex-3-ene-1-carboxylate + CO2. The protein operates within quinol/quinone metabolism; 1,4-dihydroxy-2-naphthoate biosynthesis; 1,4-dihydroxy-2-naphthoate from chorismate: step 2/7. Its pathway is quinol/quinone metabolism; menaquinone biosynthesis. Catalyzes the thiamine diphosphate-dependent decarboxylation of 2-oxoglutarate and the subsequent addition of the resulting succinic semialdehyde-thiamine pyrophosphate anion to isochorismate to yield 2-succinyl-5-enolpyruvyl-6-hydroxy-3-cyclohexene-1-carboxylate (SEPHCHC). This chain is 2-succinyl-5-enolpyruvyl-6-hydroxy-3-cyclohexene-1-carboxylate synthase, found in Saccharopolyspora erythraea (strain ATCC 11635 / DSM 40517 / JCM 4748 / NBRC 13426 / NCIMB 8594 / NRRL 2338).